Consider the following 445-residue polypeptide: MREIVHIQAGQCGNQIGAKFWQVISDEHGVDPTGTYKGDSDLQLERINVYYNEATGGRYVPRAVLIDLEPGTMDAVRAGPFGQLFRPDNFVFGQTGAGNNWAKGHYTEGAELIDSVLDVVRNEAESCDCLQGFQMTHSLGGGTGSGMGTLLIAKLREEYPDRVMMTFSVCPSPKVSDTVVEPYNATLSVHQIVENTDESFVLDNEALYDICFRTLKLTTPTYGDLNHLVCVCMSGVTSSLRFPGQLNCDLRKVAVNLIPFPRLHFFMVGFAPLTSRGSQQYRALTVPELTQQCFDAKNMMCAADPRHGRFLTASCMFRGRMSTKEVDEQMLNVQTKNSSYFVEWIPNNIKASVCDIPPKGLKMSSTFVGNSTAIQEMFKRVGEQFTAMYKRKAFLHWYTGEGMDDMEFTEAESNMNDLVSEYQQYQEASADDEADEFDEEEGDEE.

GTP is bound by residues glutamine 11, glutamate 69, serine 138, glycine 142, threonine 143, glycine 144, asparagine 204, and asparagine 226. Glutamate 69 is a binding site for Mg(2+). Positions 417 to 426 (DLVSEYQQYQ) are enriched in polar residues. Residues 417-445 (DLVSEYQQYQEASADDEADEFDEEEGDEE) form a disordered region. Acidic residues predominate over residues 429–445 (SADDEADEFDEEEGDEE).

It belongs to the tubulin family. Dimer of alpha and beta chains. A typical microtubule is a hollow water-filled tube with an outer diameter of 25 nm and an inner diameter of 15 nM. Alpha-beta heterodimers associate head-to-tail to form protofilaments running lengthwise along the microtubule wall with the beta-tubulin subunit facing the microtubule plus end conferring a structural polarity. Microtubules usually have 13 protofilaments but different protofilament numbers can be found in some organisms and specialized cells. The cofactor is Mg(2+).

It localises to the cytoplasm. It is found in the cytoskeleton. In terms of biological role, tubulin is the major constituent of microtubules, a cylinder consisting of laterally associated linear protofilaments composed of alpha- and beta-tubulin heterodimers. Microtubules grow by the addition of GTP-tubulin dimers to the microtubule end, where a stabilizing cap forms. Below the cap, tubulin dimers are in GDP-bound state, owing to GTPase activity of alpha-tubulin. This is Tubulin beta-3 chain (TUBB3) from Oomycete-like sp. (strain MacKay2000).